A 488-amino-acid polypeptide reads, in one-letter code: (S)-canadine synthase CYP719A21 (488 aa).

Residues 6 to 26 traverse the membrane as a helical segment; it reads LWILTLISTILAVFAAVLIIF. A heme-binding site is contributed by Cys-432.

Belongs to the cytochrome P450 family. Requires heme as cofactor.

The protein localises to the membrane. The catalysed reaction is (S)-tetrahydrocolumbamine + reduced [NADPH--hemoprotein reductase] + O2 = (S)-canadine + oxidized [NADPH--hemoprotein reductase] + 2 H2O + H(+). It participates in alkaloid biosynthesis. Functionally, cytochrome P450 involved in the biosynthesis of the benzylisoquinoline alkaloid noscapine. Converts (S)-tetrahydrocolumbamine to (S)-canadine. This is (S)-canadine synthase CYP719A21 from Papaver somniferum (Opium poppy).